The sequence spans 253 residues: Ribosomal RNA small subunit methyltransferase J (253 aa).

S-adenosyl-L-methionine contacts are provided by residues 98 to 99, 114 to 115, 150 to 151, and Asp-172; these read RD, ER, and SS.

It belongs to the methyltransferase superfamily. RsmJ family.

It localises to the cytoplasm. The enzyme catalyses guanosine(1516) in 16S rRNA + S-adenosyl-L-methionine = N(2)-methylguanosine(1516) in 16S rRNA + S-adenosyl-L-homocysteine + H(+). In terms of biological role, specifically methylates the guanosine in position 1516 of 16S rRNA. The protein is Ribosomal RNA small subunit methyltransferase J of Shewanella pealeana (strain ATCC 700345 / ANG-SQ1).